A 259-amino-acid chain; its full sequence is Hemin import ATP-binding protein HmuV (259 aa).

Residues 6-242 (IQGRDLCVTY…ERIEQVYGYQ (237 aa)) form the ABC transporter domain. 38 to 45 (GPNGAGKS) serves as a coordination point for ATP.

This sequence belongs to the ABC transporter superfamily. Heme (hemin) importer (TC 3.A.1.14.5) family. The complex is composed of two ATP-binding proteins (HmuV), two transmembrane proteins (HmuU) and a solute-binding protein (HmuT).

It is found in the cell inner membrane. Its function is as follows. Part of the ABC transporter complex HmuTUV involved in hemin import. Responsible for energy coupling to the transport system. This chain is Hemin import ATP-binding protein HmuV, found in Vibrio cholerae serotype O1 (strain ATCC 39315 / El Tor Inaba N16961).